The sequence spans 215 residues: Adenylate kinase (215 aa).

10–15 (GAGKGT) contacts ATP. The NMP stretch occupies residues 30 to 59 (STGDILRANVRDGTKLGKEAKGYMDKGELV). AMP-binding positions include Thr31, Arg36, 57–59 (ELV), 85–88 (GYPR), and Gln92. The segment at 126 to 162 (GRYVCTCGESYHMKFNPPKKENVCDACGADLYQRDDD) is LID. Residue Arg127 participates in ATP binding. Zn(2+) is bound by residues Cys130 and Cys132. 135 to 136 (SY) provides a ligand contact to ATP. Residues Cys149 and Cys152 each contribute to the Zn(2+) site. Arg159 and Arg170 together coordinate AMP. An ATP-binding site is contributed by Gly198.

The protein belongs to the adenylate kinase family. Monomer.

The protein resides in the cytoplasm. It carries out the reaction AMP + ATP = 2 ADP. Its pathway is purine metabolism; AMP biosynthesis via salvage pathway; AMP from ADP: step 1/1. Functionally, catalyzes the reversible transfer of the terminal phosphate group between ATP and AMP. Plays an important role in cellular energy homeostasis and in adenine nucleotide metabolism. This is Adenylate kinase from Methanococcoides burtonii (strain DSM 6242 / NBRC 107633 / OCM 468 / ACE-M).